Reading from the N-terminus, the 382-residue chain is Sphingoid long-chain base transporter RSB1 (382 aa).

Residues 1–34 (MSNATNNTLGSLLPQLEAAANSNSLYGGMVPNLR) lie on the Extracellular side of the membrane. 2 N-linked (GlcNAc...) asparagine glycosylation sites follow: Asn3 and Asn6. Residues 35–55 (FNITMIVIWGILLTIHVVQLL) traverse the membrane as a helical segment. Residues 56-57 (MR) lie on the Cytoplasmic side of the membrane. Residues 58–78 (QYWFSIAFICTGILEVLGFIG) form a helical membrane-spanning segment. Residues 79 to 90 (RTWSHSNVADMD) lie on the Extracellular side of the membrane. The helical transmembrane segment at 91-111 (AFLLNMICLTIAPVFTMGGIY) threads the bilayer. At 112–135 (YQLAKLIEVYGHRFSLLPSPMAYS) the chain is on the cytoplasmic side. A helical transmembrane segment spans residues 136 to 156 (FIFICSDIVSLVVQAVGGGLC). Residues 157 to 171 (GVAVTDGTSTTTGNH) lie on the Extracellular side of the membrane. Residues 172–192 (VFIAGLAIQVASMAIFLMLWF) form a helical membrane-spanning segment. At 193–241 (HFLFRIYISVRWEHINSRPISLSLLKISQTEVDYLYREKFHFLRLEPKR) the chain is on the cytoplasmic side. Residues 242 to 262 (WVFHYFNLAMTVAVLTIFTRC) form a helical membrane-spanning segment. At 263–281 (CYRLAELVVGWDGYLITHE) the chain is on the extracellular side. Residues 282 to 302 (WYFIILDALMMAIATVTLTIF) traverse the membrane as a helical segment. The Cytoplasmic segment spans residues 303–382 (HPGFAFKGRS…LFSSKKKAKL (80 aa)).

Belongs to the lipid-translocating exporter (LTE) (TC 9.A.26.1) family.

Its subcellular location is the cell membrane. Catalyzes the ATP-dependent translocation of sphingoid long-chain bases (LCBs) from the cytoplasmic site toward the extracytoplasmic side of the membrane (flip-flop). Involved in the establishment of the functional lipid asymmetry of the plasma membrane. Regulates intracellular levels of LCBs, sphingolipid precursors that are growth inhibitory at increased levels. The chain is Sphingoid long-chain base transporter RSB1 (RSB1) from Saccharomyces cerevisiae (strain AWRI1631) (Baker's yeast).